The sequence spans 146 residues: Angiogenin (146 aa).

The signal sequence occupies residues 1 to 24; sequence MVMGLGLFLLVFMLGLGLTPPTLA. Pyrrolidone carboxylic acid is present on Q25. H37 serves as the catalytic Proton acceptor. R45 is a binding site for tRNA. 3 disulfides stabilise this stretch: C50/C105, C63/C116, and C81/C131. The Nucleolar localization signal signature appears at 55-59; sequence RRRGL. C105 and I127 together coordinate tRNA. Residue H138 is the Proton donor of the active site.

This sequence belongs to the pancreatic ribonuclease family. As to quaternary structure, homodimer. Interacts with RNH1; inhibiting ANG ribonuclease activity. Interacts with PCNA.

The protein localises to the secreted. The protein resides in the nucleus. It localises to the nucleolus. It is found in the cytoplasm. Its subcellular location is the stress granule. Has weak tRNA ribonuclease activity by itself due to partial autoinhibition by its C-terminus, which folds into a short alpha-helix that partially occludes the substrate-binding site. In absence of stress, the ribonuclease activity is inhibited by RNH1 in the cytoplasm. In response to stress, dissociates from RNH1 in the cytoplasm and associates with cytoplasmic ribosomes with vacant A-sites: ribosomes directly activate the tRNA ribonuclease activity of ANG by refolding the C-terminal alpha-helix. In response to stress, the angiogenic activity of ANG is inhibited by RNH1 in the nucleus. Its function is as follows. Secreted ribonuclease that can either promote or restrict cell proliferation of target cells, depending on the context. Endocytosed in target cells via its receptor PLXNB2 and translocates to the cytoplasm or nucleus. Under stress conditions, localizes to the cytoplasm and promotes the assembly of stress granules (SGs): specifically cleaves a subset of tRNAs within anticodon loops to produce tRNA-derived stress-induced fragments (tiRNAs), resulting in translation repression and inhibition of cell proliferation. tiRNas also prevent formation of apoptosome, thereby promoting cell survival. Preferentially cleaves RNAs between a pyrimidine and an adenosine residue, suggesting that it cleaves the anticodon loop of tRNA(Ala) (32-UUAGCAU-38) after positions 33 and 36. Cleaves a subset of tRNAs, including tRNA(Ala), tRNA(Glu), tRNA(Gly), tRNA(Lys), tRNA(Val), tRNA(His), tRNA(Asp) and tRNA(Sec). Under growth conditions and in differentiated cells, translocates to the nucleus and stimulates ribosomal RNA (rRNA) transcription, including that containing the initiation site sequences of 45S rRNA, thereby promoting cell growth and proliferation. Angiogenin induces vascularization of normal and malignant tissues via its ability to promote rRNA transcription. Involved in hematopoietic stem and progenitor cell (HSPC) growth and survival by promoting rRNA transcription in growth conditions and inhibiting translation in response to stress, respectively. Mediates the crosstalk between myeloid and intestinal epithelial cells to protect the intestinal epithelial barrier integrity: secreted by myeloid cells and promotes intestinal epithelial cells proliferation and survival. Also mediates osteoclast-endothelial cell crosstalk in growing bone: produced by osteoclasts and protects the neighboring vascular cells against senescence by promoting rRNA transcription. The sequence is that of Angiogenin (ANG) from Trachypithecus francoisi (Francois' leaf monkey).